We begin with the raw amino-acid sequence, 483 residues long: Regulatory protein ViaA (483 aa).

This sequence belongs to the ViaA family. As to quaternary structure, homodimer. Interacts with RavA.

The protein resides in the cytoplasm. Functionally, component of the RavA-ViaA chaperone complex, which may act on the membrane to optimize the function of some of the respiratory chains. ViaA stimulates the ATPase activity of RavA. The chain is Regulatory protein ViaA from Shigella flexneri.